The following is a 150-amino-acid chain: Ribosome maturation factor RimP (150 aa).

This sequence belongs to the RimP family.

The protein resides in the cytoplasm. Required for maturation of 30S ribosomal subunits. The polypeptide is Ribosome maturation factor RimP (Methylococcus capsulatus (strain ATCC 33009 / NCIMB 11132 / Bath)).